The primary structure comprises 267 residues: Putative ABC transporter permease protein MJ0413 (267 aa).

7 helical membrane-spanning segments follow: residues 18 to 38, 48 to 68, 78 to 98, 115 to 135, 136 to 156, 188 to 208, and 228 to 248; these read VLKI…AIYI, EAVI…GSLI, VISG…LMGY, PIPP…GEMS, MIFI…ISGV, PSIL…VVAA, and LSRM…GLVL. Positions 71–252 constitute an ABC transmembrane type-1 domain; that stretch reads TIISIKRVIS…LIGLVLDRGL (182 aa).

Belongs to the binding-protein-dependent transport system permease family. CysTW subfamily.

Its subcellular location is the cell membrane. Functionally, probably part of a binding-protein-dependent transport system. Probably responsible for the translocation of the substrate across the membrane. This is Putative ABC transporter permease protein MJ0413 from Methanocaldococcus jannaschii (strain ATCC 43067 / DSM 2661 / JAL-1 / JCM 10045 / NBRC 100440) (Methanococcus jannaschii).